A 649-amino-acid chain; its full sequence is Protein translocase subunit SecA 2 (649 aa).

ATP contacts are provided by residues glutamine 105, glycine 123 to threonine 127, and aspartate 535.

This sequence belongs to the SecA family. Monomer and homodimer. Part of the essential Sec protein translocation apparatus which comprises SecA, SecYEG and auxiliary proteins SecDF-YajC and YidC.

The protein resides in the cell inner membrane. It localises to the cytoplasm. The enzyme catalyses ATP + H2O + cellular proteinSide 1 = ADP + phosphate + cellular proteinSide 2.. Its function is as follows. Part of the Sec protein translocase complex. Interacts with the SecYEG preprotein conducting channel. Has a central role in coupling the hydrolysis of ATP to the transfer of proteins into and across the cell membrane, serving both as a receptor for the preprotein-SecB complex and as an ATP-driven molecular motor driving the stepwise translocation of polypeptide chains across the membrane. The protein is Protein translocase subunit SecA 2 of Magnetococcus marinus (strain ATCC BAA-1437 / JCM 17883 / MC-1).